Consider the following 124-residue polypeptide: Small ribosomal subunit protein uS12 (124 aa).

Residue Asp-89 is modified to 3-methylthioaspartic acid.

It belongs to the universal ribosomal protein uS12 family. As to quaternary structure, part of the 30S ribosomal subunit. Contacts proteins S8 and S17. May interact with IF1 in the 30S initiation complex.

With S4 and S5 plays an important role in translational accuracy. Functionally, interacts with and stabilizes bases of the 16S rRNA that are involved in tRNA selection in the A site and with the mRNA backbone. Located at the interface of the 30S and 50S subunits, it traverses the body of the 30S subunit contacting proteins on the other side and probably holding the rRNA structure together. The combined cluster of proteins S8, S12 and S17 appears to hold together the shoulder and platform of the 30S subunit. This Serratia proteamaculans (strain 568) protein is Small ribosomal subunit protein uS12.